Consider the following 556-residue polypeptide: Testis-specific protein 10-interacting protein (556 aa).

Residues 1–16 (MGQDTDMLNTYQQLVR) are compositionally biased toward polar residues. Disordered regions lie at residues 1–31 (MGQDTDMLNTYQQLVRTPSVRPGQDVRLQAP), 50–102 (GCLG…LLPR), 123–155 (LQPSSPTPGHQALPMPSSFSQRQSRRKSTANLP), and 179–309 (GGVS…QWRK). The span at 208–219 (GSASDKQVQLQS) shows a compositional bias: polar residues. Positions 244-258 (SEEEQFSEATEEAEE) are enriched in acidic residues. Residues 289–301 (QGQSQGSSPSFNN) show a composition bias toward polar residues. Positions 379–464 (RQEATRSLLQ…LQGIQHRVQA (86 aa)) form a coiled coil. Residues 503-556 (AGKVDREGTPRKPRSHRSMGVRMEHSPQRPPRTEPTGSQPDRHYNPSLDPECSP) are disordered.

The protein is Testis-specific protein 10-interacting protein (TSGA10IP) of Homo sapiens (Human).